The sequence spans 465 residues: ATP synthase subunit beta (465 aa).

Position 152–159 (152–159) interacts with ATP; it reads GGAGVGKT.

Belongs to the ATPase alpha/beta chains family. F-type ATPases have 2 components, CF(1) - the catalytic core - and CF(0) - the membrane proton channel. CF(1) has five subunits: alpha(3), beta(3), gamma(1), delta(1), epsilon(1). CF(0) has three main subunits: a(1), b(2) and c(9-12). The alpha and beta chains form an alternating ring which encloses part of the gamma chain. CF(1) is attached to CF(0) by a central stalk formed by the gamma and epsilon chains, while a peripheral stalk is formed by the delta and b chains.

The protein localises to the cell membrane. The catalysed reaction is ATP + H2O + 4 H(+)(in) = ADP + phosphate + 5 H(+)(out). Produces ATP from ADP in the presence of a proton gradient across the membrane. The catalytic sites are hosted primarily by the beta subunits. The protein is ATP synthase subunit beta of Ruminiclostridium cellulolyticum (strain ATCC 35319 / DSM 5812 / JCM 6584 / H10) (Clostridium cellulolyticum).